Here is a 367-residue protein sequence, read N- to C-terminus: MQVLVALAALSSLAAPVVGFSIPRGVPVSQSMIDVKLSSAGNSMVKATITNNGDRALNLLKFHTIMDSNPTRKVSIESQDGKEVQFTGMMPRYKNTDLKPTYFMSLPPKGTVEHSFDIAATHDLSRGGQFTLKAEGMVPIAEENSTNITGAAQYHSNELHMTIDGDQAASVKSAIGVAKRDGPFTRIDKRTKIDMQSCGNRQELQALTAALSASAKLSSMSAQAVGQNQQKYMEYFKDPKYAKTVQSRFQAVAKESSSTNNGGTTYFCSDVMGGCEEGVLAYTLPSRNQVYNCPIYYSELPPLTKECHAQDQATTTLHELTHNPAVQEPFCEDNGYGYERATALSAEKAVQNADSYALFANAVYVGC.

A signal peptide spans 1 to 19 (MQVLVALAALSSLAAPVVG). A propeptide spanning residues 20-190 (FSIPRGVPVS…DGPFTRIDKR (171 aa)) is cleaved from the precursor. 3 cysteine pairs are disulfide-bonded: cysteine 198-cysteine 268, cysteine 275-cysteine 293, and cysteine 307-cysteine 367. Histidine 318 provides a ligand contact to Zn(2+). Glutamate 319 is a catalytic residue. 2 residues coordinate Zn(2+): histidine 322 and aspartate 333.

The protein belongs to the peptidase M35 family. Requires Zn(2+) as cofactor.

It localises to the secreted. It carries out the reaction Preferential cleavage of bonds with hydrophobic residues in P1'. Also 3-Asn-|-Gln-4 and 8-Gly-|-Ser-9 bonds in insulin B chain.. Functionally, probable secreted metalloprotease that shows high activities on basic nuclear substrates such as histone and protamine. May be involved in virulence. The chain is Probable neutral protease 2 homolog MCYG_00239 from Arthroderma otae (strain ATCC MYA-4605 / CBS 113480) (Microsporum canis).